The primary structure comprises 345 residues: Heat-inducible transcription repressor HrcA (345 aa).

The protein belongs to the HrcA family.

Negative regulator of class I heat shock genes (grpE-dnaK-dnaJ and groELS operons). Prevents heat-shock induction of these operons. In Listeria monocytogenes serotype 1/2a (strain 10403S), this protein is Heat-inducible transcription repressor HrcA.